We begin with the raw amino-acid sequence, 55 residues long: Large ribosomal subunit protein bL33 (55 aa).

The protein belongs to the bacterial ribosomal protein bL33 family.

The protein is Large ribosomal subunit protein bL33 of Sinorhizobium fredii (strain NBRC 101917 / NGR234).